We begin with the raw amino-acid sequence, 242 residues long: Exosome complex component ski6 (242 aa).

Belongs to the RNase PH family. Component of the RNA exosome complex. Specifically part of the catalytically inactive RNA exosome core complex (Exo-9) which may associate with the catalytic subunits rrp6 and dis3 in cytoplasmic- and nuclear-specific RNA exosome complex forms. Exo-9 is formed by a hexameric base ring of RNase PH domain-containing subunits and a cap ring consisting of csl4, rrp4 and rrp40.

It is found in the cytoplasm. The protein resides in the nucleus. It localises to the nucleolus. Non-catalytic component of the RNA exosome complex which has 3'-&gt;5' exoribonuclease activity and participates in a multitude of cellular RNA processing and degradation events. In the nucleus, the RNA exosome complex is involved in proper maturation of stable RNA species such as rRNA, snRNA and snoRNA, in the elimination of RNA processing by-products and non-coding 'pervasive' transcripts, such as antisense RNA species and cryptic unstable transcripts (CUTs), and of mRNAs with processing defects, thereby limiting or excluding their export to the cytoplasm. In the cytoplasm, the RNA exosome complex is involved in general mRNA turnover and in RNA surveillance pathways, preventing translation of aberrant mRNAs. The catalytic inactive RNA exosome core complex of 9 subunits (Exo-9) is proposed to play a pivotal role in the binding and presentation of RNA for ribonucleolysis, and to serve as a scaffold for the association with catalytic subunits and accessory proteins or complexes. ski6 is part of the hexameric ring of RNase PH domain-containing subunits proposed to form a central channel which threads RNA substrates for degradation. The polypeptide is Exosome complex component ski6 (ski6) (Schizosaccharomyces pombe (strain 972 / ATCC 24843) (Fission yeast)).